The following is a 391-amino-acid chain: Period circadian protein (391 aa).

4 disordered regions span residues 27-121, 163-188, 241-270, and 328-357; these read VTAP…PPVT, MLEYSGPGPGHGHGIKRGGSHSWEGE, GSSAGGNGSGTGNNNGNGNNNQPTTNQFTQ, and SPSGTSPNPNRPHKHAHVHSSSEKPSTSQA. Gly residues predominate over residues 93 to 114; that stretch reads GTSGTGNSGDGGGGGGADGPGS. Gly residues predominate over residues 241-255; sequence GSSAGGNGSGTGNNN.

As to quaternary structure, forms a heterodimer with timeless (TIM); the complex then translocates into the nucleus. Phosphorylated with a circadian rhythmicity, probably by the double-time protein (dbt). Phosphorylation could be implicated in the stability of per monomer and in the formation of heterodimer per-tim.

It localises to the nucleus. It is found in the cytoplasm. The protein localises to the perinuclear region. Functionally, essential for biological clock functions. Determines the period length of circadian and ultradian rhythms; an increase in PER dosage leads to shortened circadian rhythms and a decrease leads to lengthened circadian rhythms. Essential for the circadian rhythmicity of locomotor activity, eclosion behavior, and for the rhythmic component of the male courtship song that originates in the thoracic nervous system. The biological cycle depends on the rhythmic formation and nuclear localization of the TIM-PER complex. Light induces the degradation of TIM, which promotes elimination of PER. Nuclear activity of the heterodimer coordinatively regulates PER and TIM transcription through a negative feedback loop. Behaves as a negative element in circadian transcriptional loop. Does not appear to bind DNA, suggesting indirect transcriptional inhibition. This Drosophila insularis (Fruit fly) protein is Period circadian protein (per).